Consider the following 176-residue polypeptide: MDQLKYPIGTFSKPLEADERELEKWIGDLKQAPHLLRSAAAELNEEQLDTPYRTGGWAVRQVVHHLADSHMNGYIRSKLALTEETPLIRTFDEQNWAGLTDARTLDPDLSLALLDTLHLRWAALXESLTEADFEKAYIYPGTGEEMKLYQALALYVWHSQHHIAHIKAHRKRMGWN.

Histidine 65, histidine 158, and histidine 162 together coordinate Zn(2+).

This sequence belongs to the metal hydrolase YfiT family. Homodimer. The cofactor is Zn(2+).

The protein resides in the cytoplasm. In terms of biological role, possible metal-dependent hydrolase. This chain is Putative metal-dependent hydrolase BLi00869/BLi00870/BL03027, found in Bacillus licheniformis (strain ATCC 14580 / DSM 13 / JCM 2505 / CCUG 7422 / NBRC 12200 / NCIMB 9375 / NCTC 10341 / NRRL NRS-1264 / Gibson 46).